A 417-amino-acid chain; its full sequence is Serine hydroxymethyltransferase 1 (417 aa).

Residues leucine 121 and 125 to 127 (GHL) each bind (6S)-5,6,7,8-tetrahydrofolate. Position 230 is an N6-(pyridoxal phosphate)lysine (lysine 230). Residue 355 to 357 (SPF) participates in (6S)-5,6,7,8-tetrahydrofolate binding.

It belongs to the SHMT family. As to quaternary structure, homodimer. Requires pyridoxal 5'-phosphate as cofactor.

It is found in the cytoplasm. The catalysed reaction is (6R)-5,10-methylene-5,6,7,8-tetrahydrofolate + glycine + H2O = (6S)-5,6,7,8-tetrahydrofolate + L-serine. Its pathway is one-carbon metabolism; tetrahydrofolate interconversion. It functions in the pathway amino-acid biosynthesis; glycine biosynthesis; glycine from L-serine: step 1/1. Its function is as follows. Catalyzes the reversible interconversion of serine and glycine with tetrahydrofolate (THF) serving as the one-carbon carrier. This reaction serves as the major source of one-carbon groups required for the biosynthesis of purines, thymidylate, methionine, and other important biomolecules. Also exhibits THF-independent aldolase activity toward beta-hydroxyamino acids, producing glycine and aldehydes, via a retro-aldol mechanism. The sequence is that of Serine hydroxymethyltransferase 1 from Pseudomonas putida (strain ATCC 47054 / DSM 6125 / CFBP 8728 / NCIMB 11950 / KT2440).